The sequence spans 122 residues: NADH-ubiquinone oxidoreductase chain 3 (122 aa).

3 helical membrane-spanning segments follow: residues 12–32 (VLIF…LSYV), 66–86 (LVAI…PWAV), and 91–111 (VTIF…VGFI).

The protein belongs to the complex I subunit 3 family.

The protein resides in the mitochondrion membrane. The catalysed reaction is a ubiquinone + NADH + 5 H(+)(in) = a ubiquinol + NAD(+) + 4 H(+)(out). Functionally, core subunit of the mitochondrial membrane respiratory chain NADH dehydrogenase (Complex I) that is believed to belong to the minimal assembly required for catalysis. Complex I functions in the transfer of electrons from NADH to the respiratory chain. The immediate electron acceptor for the enzyme is believed to be ubiquinone. The sequence is that of NADH-ubiquinone oxidoreductase chain 3 (NAD3) from Reclinomonas americana.